We begin with the raw amino-acid sequence, 314 residues long: Tudor-interacting repair regulator protein (314 aa).

Glycine 2 is lipidated: N-myristoyl glycine.

It belongs to the Nudix hydrolase family. TIRR subfamily. Interacts (via the cytoplasmic part) with syndecan-4 (SDC4), but not with other syndecan proteins. Myristoylated in vitro; additional evidence is however required to confirm myristoylation in vivo. In terms of tissue distribution, ubiquitously expressed. Expressed in embryonic brain, eyes, gizzard, heart, intestine, kidney, liver, tibia and skin.

Its subcellular location is the nucleus. The protein resides in the cytoplasm. It is found in the cytoskeleton. The protein localises to the cell membrane. It localises to the cell junction. Its subcellular location is the focal adhesion. Functionally, key regulator of TP53BP1 required to stabilize TP53BP1 and regulate its recruitment to chromatin. This is Tudor-interacting repair regulator protein (NUDT16L1) from Gallus gallus (Chicken).